The chain runs to 58 residues: uncharacterized protein (58 aa).

It belongs to the ycf18/nblA family.

It is found in the plastid. The protein resides in the chloroplast. This is an uncharacterized protein from Porphyra purpurea (Red seaweed).